A 161-amino-acid chain; its full sequence is Type IV major fimbrial protein FimA (161 aa).

The propeptide at 1–7 (MKSLQKG) is leader sequence. Phenylalanine 8 is subject to N-methylphenylalanine. A helical membrane pass occupies residues 8–28 (FTLIELMIVVAIIGILAAFAI). The cysteines at positions 63 and 106 are disulfide-linked.

This sequence belongs to the N-Me-Phe pilin family. In terms of assembly, the pili are polar flexible filaments of about 5.4 nanometers diameter and 2.5 micrometers average length; they consist of only a single polypeptide chain arranged in a helical configuration of five subunits per turn in the assembled pilus.

It is found in the fimbrium. It localises to the membrane. Its function is as follows. Major component of the type IV fimbriae that plays an essential role in twitching motility, natural transformation, and protease secretion. In Dichelobacter nodosus (Bacteroides nodosus), this protein is Type IV major fimbrial protein FimA (fimA).